We begin with the raw amino-acid sequence, 213 residues long: Pyridoxine/pyridoxamine 5'-phosphate oxidase (213 aa).

Residues 8–11 (RKNY) and Lys-66 each bind substrate. FMN contacts are provided by residues 61-66 (RIVLIK), 76-77 (FT), Arg-82, Lys-83, and Gln-105. 3 residues coordinate substrate: Tyr-123, Arg-127, and Ser-131. Residues 140–141 (QS) and Trp-184 each bind FMN. 190-192 (RLH) is a substrate binding site. Arg-194 serves as a coordination point for FMN.

This sequence belongs to the pyridoxamine 5'-phosphate oxidase family. Homodimer. FMN serves as cofactor.

The catalysed reaction is pyridoxamine 5'-phosphate + O2 + H2O = pyridoxal 5'-phosphate + H2O2 + NH4(+). It catalyses the reaction pyridoxine 5'-phosphate + O2 = pyridoxal 5'-phosphate + H2O2. It participates in cofactor metabolism; pyridoxal 5'-phosphate salvage; pyridoxal 5'-phosphate from pyridoxamine 5'-phosphate: step 1/1. Its pathway is cofactor metabolism; pyridoxal 5'-phosphate salvage; pyridoxal 5'-phosphate from pyridoxine 5'-phosphate: step 1/1. Functionally, catalyzes the oxidation of either pyridoxine 5'-phosphate (PNP) or pyridoxamine 5'-phosphate (PMP) into pyridoxal 5'-phosphate (PLP). This chain is Pyridoxine/pyridoxamine 5'-phosphate oxidase, found in Paraburkholderia xenovorans (strain LB400).